The sequence spans 486 residues: ATP-dependent rRNA helicase RRP3 (486 aa).

Over residues 1-11 (MSKVTKQSKSH) the composition is skewed to basic residues. Residues 1–52 (MSKVTKQSKSHKSSELVSLAEKIKQKALENRKQSREESQATEEANTASETEA) are disordered. Residues 17–49 (VSLAEKIKQKALENRKQSREESQATEEANTASE) adopt a coiled-coil conformation. Over residues 21–38 (EKIKQKALENRKQSREES) the composition is skewed to basic and acidic residues. Positions 41 to 52 (TEEANTASETEA) are enriched in low complexity. The Q motif motif lies at 66–94 (SSFRELDLVPELIEACDNLNFTKPTPIQS). In terms of domain architecture, Helicase ATP-binding spans 97–269 (IPPALQGKDI…RASLTNPVKC (173 aa)). Residue 110 to 117 (AQTGSGKT) coordinates ATP. The DEAD box signature appears at 216 to 219 (DEAD). The 147-residue stretch at 300 to 446 (LLNEFIGKTT…SIVLSLRDSV (147 aa)) folds into the Helicase C-terminal domain. Positions 459 to 486 (RRNKEKQTRGKGRRSRTATRENMDKEEE) are disordered. Residues 476–486 (ATRENMDKEEE) show a composition bias toward basic and acidic residues.

Belongs to the DEAD box helicase family. DDX47/RRP3 subfamily. As to quaternary structure, interacts with the SSU processome.

The protein localises to the nucleus. The catalysed reaction is ATP + H2O = ADP + phosphate + H(+). Its function is as follows. ATP-dependent rRNA helicase required for pre-ribosomal RNA processing. Involved in the maturation of the 35S-pre-rRNA and to its cleavage to mature 18S rRNA. In Eremothecium gossypii (strain ATCC 10895 / CBS 109.51 / FGSC 9923 / NRRL Y-1056) (Yeast), this protein is ATP-dependent rRNA helicase RRP3.